Reading from the N-terminus, the 229-residue chain is Orotidine 5'-phosphate decarboxylase (229 aa).

Residues Asp-10, Lys-32, 59–68, Thr-119, Arg-180, Gln-189, Gly-209, and Arg-210 contribute to the substrate site; that span reads DLKFHDIPNT. Catalysis depends on Lys-61, which acts as the Proton donor.

Belongs to the OMP decarboxylase family. Type 1 subfamily. Homodimer.

It carries out the reaction orotidine 5'-phosphate + H(+) = UMP + CO2. It participates in pyrimidine metabolism; UMP biosynthesis via de novo pathway; UMP from orotate: step 2/2. In terms of biological role, catalyzes the decarboxylation of orotidine 5'-monophosphate (OMP) to uridine 5'-monophosphate (UMP). The polypeptide is Orotidine 5'-phosphate decarboxylase (Legionella pneumophila subsp. pneumophila (strain Philadelphia 1 / ATCC 33152 / DSM 7513)).